Consider the following 558-residue polypeptide: Two-component response regulator-like APRR5 (558 aa).

The Response regulatory domain maps to 51 to 169 (RVLLVEADDS…ELRNLWQHVW (119 aa)). A disordered region spans residues 180–233 (FPWNESVGQQKAEGASANNSNGKRDDHVVSGNGGDAQSSCTRPEMEGESADVEV). A coiled-coil region spans residues 240-260 (QMECAKSQFNETRLLANELQS). Disordered regions lie at residues 297–319 (SLRR…HPSS) and 535–558 (KKLA…TQAP). The span at 303 to 319 (ASENQSSGDRPSLHPSS) shows a compositional bias: polar residues. The region spanning 509-551 (REAALTKFRMKRKDRCYEKKVRYESRKKLAEQRPRIKGQFVRQ) is the CCT domain.

The protein belongs to the ARR-like family. In terms of assembly, interacts with ADO1 and ADO2. Interacts with SPY (via N-terminus). In terms of processing, phosphorylation varies throughout the diurnal cycle and enhances ADO1 binding. O-fucosylated by SPY. O-fucosylation promotes APRR5 proteolysis.

It is found in the nucleus. Its function is as follows. Transcriptional repressor of CCA1 and LHY, thereby controlling photoperiodic flowering response. Involved in the positive and negative feedback loops of the circadian clock. With RVE8, forms a negative feedback loop of the circadian clock. Expression of several members of the ARR-like family is controlled by circadian rhythm. Proteolytic substrate of the E3 ubiquitin ligase SCF(ADO1) complex. APRR9, APRR7, and APRR5 coordinately act on the upstream region of the target genes to repress their expression from noon until midnight. The particular coordinated sequential expression of APRR9, APRR7, APRR5, APRR3 and APPR1 result to circadian waves that may be at the basis of the endogenous circadian clock. Negative regulator of shade avoidance response. Involved in the inhibition of leaf expansion in shade avoidance response. The chain is Two-component response regulator-like APRR5 (APRR5) from Arabidopsis thaliana (Mouse-ear cress).